We begin with the raw amino-acid sequence, 351 residues long: D-alanine--D-alanine ligase (351 aa).

One can recognise an ATP-grasp domain in the interval 135-343 (NQIFLQSGQK…MEEVFADLIE (209 aa)). 167-222 (LMSLGFPQFLKPVEGGSSVSTYKITNQEQLSRQLALIFESDSKVMSQSFLAGTEVS) is an ATP binding site. Positions 298, 310, and 312 each coordinate Mg(2+).

This sequence belongs to the D-alanine--D-alanine ligase family. It depends on Mg(2+) as a cofactor. The cofactor is Mn(2+).

It is found in the cytoplasm. It carries out the reaction 2 D-alanine + ATP = D-alanyl-D-alanine + ADP + phosphate + H(+). It participates in cell wall biogenesis; peptidoglycan biosynthesis. In terms of biological role, cell wall formation. The chain is D-alanine--D-alanine ligase from Leptospira borgpetersenii serovar Hardjo-bovis (strain JB197).